We begin with the raw amino-acid sequence, 155 residues long: Small ribosomal subunit protein uS7c (155 aa).

It belongs to the universal ribosomal protein uS7 family. As to quaternary structure, part of the 30S ribosomal subunit.

The protein localises to the plastid. Its subcellular location is the chloroplast. In terms of biological role, one of the primary rRNA binding proteins, it binds directly to 16S rRNA where it nucleates assembly of the head domain of the 30S subunit. This Schisandra chinensis (Chinese magnolia vine) protein is Small ribosomal subunit protein uS7c (rps7).